Consider the following 199-residue polypeptide: Recombination protein RecR (199 aa).

The segment at 58–73 (CARCGNITSADLCDIC) adopts a C4-type zinc-finger fold. One can recognise a Toprim domain in the interval 81–176 (GELCVVEDVA…QVTSLAQGVP (96 aa)).

The protein belongs to the RecR family.

Its function is as follows. May play a role in DNA repair. It seems to be involved in an RecBC-independent recombinational process of DNA repair. It may act with RecF and RecO. The protein is Recombination protein RecR of Cereibacter sphaeroides (strain ATCC 17025 / ATH 2.4.3) (Rhodobacter sphaeroides).